We begin with the raw amino-acid sequence, 838 residues long: AP-4 complex subunit beta (838 aa).

The tract at residues 582-673 is hinge; that stretch reads NSSKQTTSIN…NQNNNQNNNQ (92 aa). Positions 648–683 are disordered; it reads ITDGNQNNNQNNNQNNNQNNNQNNNQNNQNNNNQNN. A compositionally biased stretch (low complexity) spans 652 to 683; sequence NQNNNQNNNQNNNQNNNQNNNQNNQNNNNQNN. An ear region spans residues 674–838; sequence NNQNNNNQNN…LSIPIPKIFN (165 aa).

Belongs to the adaptor complexes large subunit family. In terms of assembly, may be part of the adaptor protein complex 4 (AP-4), a heterotetramer composed of two large adaptins (epsilon-type subunitand beta-type subunit), a medium adaptin (mu-type subunit) and a small adaptin (sigma-type).

It localises to the golgi apparatus. The protein resides in the trans-Golgi network membrane. In terms of biological role, probable component of an adaptor protein complex. Adaptor protein complexes are vesicle coat components involved both in vesicle formation and cargo selection. They control the vesicular transport of proteins in different trafficking pathways. This chain is AP-4 complex subunit beta (ap4b1), found in Dictyostelium discoideum (Social amoeba).